We begin with the raw amino-acid sequence, 270 residues long: MWNSGFESFSSSSYGAAGGYTQSPGGFGSPTPSQAEKKSRARAQHIVPCTISQLLSATLTDEVFKIGDVEISQVTIVGIIRHAEKAPTNIVYKIDDMTAAPMDVRQWVDTDDTSGENTVVPPETYVKVAGHLRSFQNKKSLVAFKIIPLEDMNEFTAHILEVVNSHLMLSKANSQASVGRPSMSNPGMGEPGNFSGNNFMPANGLTVVQNQVLNLIKACPRPEGLNFQDLRSQLQHMPVASIKQAVDFLCNEGHIYSTVDDDHFKSTDAE.

Position 1 is an N-acetylmethionine (M1). A phosphoserine; by PRKDC mark is found at S4 and S8. At T21 the chain carries Phosphothreonine; by PRKDC. The segment at 22 to 41 is disordered; sequence QSPGGFGSPTPSQAEKKSRA. The residue at position 23 (S23) is a Phosphoserine; by CDK2. At S29 the chain carries Phosphoserine; by CDK1. S33 carries the post-translational modification Phosphoserine; by PRKDC. Glycyl lysine isopeptide (Lys-Gly) (interchain with G-Cter in ubiquitin) cross-links involve residues K37 and K38. The segment at residues 74–148 is a DNA-binding region (OB); the sequence is VTIVGIIRHA…KSLVAFKIIP (75 aa). The tract at residues 187–270 is interaction with RAD52, TIPIN, UNG and XPA; it reads GMGEPGNFSG…DDHFKSTDAE (84 aa).

This sequence belongs to the replication factor A protein 2 family. As to quaternary structure, component of the replication protein A complex (RPA/RP-A), a heterotrimeric complex composed of RPA1, RPA2 and RPA3. Interacts with PRPF19; the PRP19-CDC5L complex is recruited to the sites of DNA repair where it ubiquitinates the replication protein A complex (RPA). Interacts with SERTAD3. Interacts with TIPIN. Interacts with TIMELESS. Interacts with PPP4R2; the interaction is direct, DNA damage-dependent and mediates the recruitment of the PP4 catalytic subunit PPP4C. Interacts (hyperphosphorylated) with RAD51. Interacts with SMARCAL1; the interaction is direct and mediates the recruitment to the RPA complex of SMARCAL1. Interacts with RAD52 and XPA; those interactions are direct and associate RAD52 and XPA to the RPA complex. Interacts with FBH1. Interacts with ETAA1; the interaction is direct and promotes ETAA1 recruitment at stalled replication forks. Interacts with DDI2. Interacts (in unphosphorylated form via N-terminus) with EIF4EBP3; the interaction enhances EIF4EBP3-mediated inhibition of EIF4E-mediated mRNA nuclear export. Interacts with nuclear UNG (isoform 2); this interaction mediates UNG recruitment to RPA-coated single-stranded DNA at stalled replication forks. Differentially phosphorylated throughout the cell cycle, becoming phosphorylated at the G1-S transition and dephosphorylated in late mitosis. Mainly phosphorylated at Ser-23 and Ser-29, by cyclin A-CDK2 and cyclin B-CDK1, respectively during DNA replication and mitosis. Dephosphorylation may require the serine/threonine-protein phosphatase 4. Phosphorylation at Ser-23 and Ser-29 is a prerequisite for further phosphorylation. Becomes hyperphosphorylated on additional residues including Ser-4, Ser-8, Thr-21 and Ser-33 in response to DNA damage. Hyperphosphorylation is mediated by ATM, ATR and PRKDC. Primarily recruited to DNA repair nuclear foci as a hypophosphorylated form it undergoes subsequent hyperphosphorylation, catalyzed by ATR. Hyperphosphorylation is required for RAD51 recruitment to chromatin and efficient DNA repair. Phosphorylation at Thr-21 depends upon RFWD3 presence. Post-translationally, DNA damage-induced 'Lys-63'-linked polyubiquitination by PRPF19 mediates ATRIP recruitment to the RPA complex at sites of DNA damage and activation of ATR. Ubiquitinated by RFWD3 at stalled replication forks in response to DNA damage: ubiquitination by RFWD3 does not lead to degradation by the proteasome and promotes removal of the RPA complex from stalled replication forks, promoting homologous recombination.

The protein resides in the nucleus. Its subcellular location is the PML body. In terms of biological role, as part of the heterotrimeric replication protein A complex (RPA/RP-A), binds and stabilizes single-stranded DNA intermediates, that form during DNA replication or upon DNA stress. It prevents their reannealing and in parallel, recruits and activates different proteins and complexes involved in DNA metabolism. Thereby, it plays an essential role both in DNA replication and the cellular response to DNA damage. In the cellular response to DNA damage, the RPA complex controls DNA repair and DNA damage checkpoint activation. Through recruitment of ATRIP activates the ATR kinase a master regulator of the DNA damage response. It is required for the recruitment of the DNA double-strand break repair factors RAD51 and RAD52 to chromatin in response to DNA damage. Also recruits to sites of DNA damage proteins like XPA and XPG that are involved in nucleotide excision repair and is required for this mechanism of DNA repair. Also plays a role in base excision repair (BER) probably through interaction with UNG. Also recruits SMARCAL1/HARP, which is involved in replication fork restart, to sites of DNA damage. May also play a role in telomere maintenance. This is Replication protein A 32 kDa subunit (Rpa2) from Rattus norvegicus (Rat).